The primary structure comprises 82 residues: Small ribosomal subunit protein bS18 (82 aa).

The protein belongs to the bacterial ribosomal protein bS18 family. In terms of assembly, part of the 30S ribosomal subunit. Forms a tight heterodimer with protein bS6.

In terms of biological role, binds as a heterodimer with protein bS6 to the central domain of the 16S rRNA, where it helps stabilize the platform of the 30S subunit. The polypeptide is Small ribosomal subunit protein bS18 (Chlamydia pneumoniae (Chlamydophila pneumoniae)).